We begin with the raw amino-acid sequence, 283 residues long: 4-diphosphocytidyl-2-C-methyl-D-erythritol kinase (283 aa).

Lys-12 is an active-site residue. Residue 94–104 (PAQAGLGGGSS) coordinates ATP. Asp-136 is a catalytic residue.

This sequence belongs to the GHMP kinase family. IspE subfamily.

The enzyme catalyses 4-CDP-2-C-methyl-D-erythritol + ATP = 4-CDP-2-C-methyl-D-erythritol 2-phosphate + ADP + H(+). The protein operates within isoprenoid biosynthesis; isopentenyl diphosphate biosynthesis via DXP pathway; isopentenyl diphosphate from 1-deoxy-D-xylulose 5-phosphate: step 3/6. Its function is as follows. Catalyzes the phosphorylation of the position 2 hydroxy group of 4-diphosphocytidyl-2C-methyl-D-erythritol. The chain is 4-diphosphocytidyl-2-C-methyl-D-erythritol kinase from Acidovorax sp. (strain JS42).